The primary structure comprises 282 residues: Elongation factor Ts (282 aa).

The tract at residues 80-83 (TDFV) is involved in Mg(2+) ion dislocation from EF-Tu.

It belongs to the EF-Ts family.

It localises to the cytoplasm. In terms of biological role, associates with the EF-Tu.GDP complex and induces the exchange of GDP to GTP. It remains bound to the aminoacyl-tRNA.EF-Tu.GTP complex up to the GTP hydrolysis stage on the ribosome. This chain is Elongation factor Ts, found in Chlamydia trachomatis serovar L2 (strain ATCC VR-902B / DSM 19102 / 434/Bu).